The following is a 497-amino-acid chain: MGATDQALEAESKTTEPPKTPPVPEQHDRPFLGRQANLCHLLVLLFSGGLAAITLHIFTSSNVGWRLRQLHHLPTAHYLQTRDEFAVYSVDELNAFKEFYDRSISDSVGSSYSEAEETNIKEALGALRLAQDMYLAGKDDKAARLFQHSLALAPRHPTVLLRYGEFLEHSQRNIVLADQYYFQALSISPSNSEALANRQRTADVVQSLDERRLESLDSKRDALSAIHESSAALRRAKKEAYFQHIYHTVGIEGNTMTLAQTRSILETRMAVDGKSIDEHNEILGMDLAMKYINASLVQKMEITIKDILELHRRVLGHVDPIEGGEFRRNQVYVGGHVPPGPGDLALLMQRFERWLNSEHSSSMHPVNYAALAHYKLVHIHPFIDGNGRTSRLLMNTLLMRAGYPPVIIPKQQRSKYYHFLKLANEGDIRPFVRFIADCTEKTLDLYLWATSDLPHQIPMLIQSTSEAGEGVPQLQSSQMGGGASIPEFHESGSGSLP.

A disordered region spans residues 1–30 (MGATDQALEAESKTTEPPKTPPVPEQHDRP). A helical membrane pass occupies residues 38-58 (LCHLLVLLFSGGLAAITLHIF). 2 TPR repeats span residues 123 to 156 (ALGA…APRH) and 157 to 191 (PTVL…SPSN). Residues 248-253 (TVGIEG) carry the Inhibitory (S/T)XXXE(G/N) motif motif. ATP is bound by residues Glu-252 and 333–336 (VGGH). The Fido domain maps to 302-437 (ITIKDILELH…IRPFVRFIAD (136 aa)). The active site involves His-380. Residues 384-391 (DGNGRTSR), 416-417 (YY), and Asn-424 contribute to the ATP site. A disordered region spans residues 468-497 (GEGVPQLQSSQMGGGASIPEFHESGSGSLP).

Belongs to the fic family. In terms of assembly, homodimer.

It localises to the membrane. The catalysed reaction is L-tyrosyl-[protein] + ATP = O-(5'-adenylyl)-L-tyrosyl-[protein] + diphosphate. It carries out the reaction L-threonyl-[protein] + ATP = 3-O-(5'-adenylyl)-L-threonyl-[protein] + diphosphate. It catalyses the reaction 3-O-(5'-adenylyl)-L-threonyl-[protein] + H2O = L-threonyl-[protein] + AMP + H(+). Its activity is regulated as follows. The side chain of Glu-252 determines which of the two opposing activities (AMPylase or de-AMPylase) will take place. In response to endoplasmic reticulum stress, mediates de-AMPylase activity. Adenylyltransferase activity is inhibited by the inhibitory helix present at the N-terminus: Glu-252 binds ATP and competes with ATP-binding at Arg-391, thereby preventing adenylyltransferase activity. In unstressed cells, disengagement of Glu-252 promotes adenylyltransferase activity. Activation dissociates ATP-binding from Glu-252, allowing ordered binding of the entire ATP moiety with the alpha-phosphate in an orientation that is productive for accepting an incoming target hydroxyl side chain. Protein that can both mediate the addition of adenosine 5'-monophosphate (AMP) to specific residues of target proteins (AMPylation), and the removal of the same modification from target proteins (de-AMPylation), depending on the context. The side chain of Glu-252 determines which of the two opposing activities (AMPylase or de-AMPylase) will take place. Acts as a key regulator of the unfolded protein response (UPR) by mediating AMPylation or de-AMPylation of Hsc70-3/BiP. In unstressed cells, acts as an adenylyltransferase by mediating AMPylation of Hsc70-3/BiP at 'Thr-518', thereby inactivating it. In response to endoplasmic reticulum stress, acts as a phosphodiesterase by mediating removal of ATP (de-AMPylation) from Hsc70-3/BiP at 'Thr-518', leading to restore HSPA5/BiP activity. This is Protein adenylyltransferase Fic from Drosophila ananassae (Fruit fly).